A 248-amino-acid chain; its full sequence is ATP synthase subunit a, chloroplastic (248 aa).

A run of 5 helical transmembrane segments spans residues 38–58, 96–116, 135–155, 200–220, and 221–241; these read QVLI…TIAV, VPFI…GALL, INTT…AGLA, LVVA…VMFL, and GLFT…AYIG.

This sequence belongs to the ATPase A chain family. As to quaternary structure, F-type ATPases have 2 components, CF(1) - the catalytic core - and CF(0) - the membrane proton channel. CF(1) has five subunits: alpha(3), beta(3), gamma(1), delta(1), epsilon(1). CF(0) has four main subunits: a, b, b' and c.

It localises to the plastid. The protein localises to the chloroplast thylakoid membrane. Functionally, key component of the proton channel; it plays a direct role in the translocation of protons across the membrane. The protein is ATP synthase subunit a, chloroplastic of Cycas taitungensis (Prince sago).